The chain runs to 1037 residues: MAEDAHTEDLSTQTPQQEGLPERLRVHSLARVLGTTSRRVLDALAEFDGRQRSAHSTVDKADAERVRAALTESPAAETPPEEAPAAETPVADLVVVQAEQVEVVTVSEAGPAEPAEPAEPEAPAAEAEAEAETEVADEAETPEPTFRGAVLVGDEPESRLILEHANIPPARETQTERPDYLPLFVAPQPVSFEPAVVDDEDEDDDTETGAESDFDSGADSDSDDDQADRPRRRRRGRRGRGRGRGEQNDDATSDADTDSTEDQTDGDEQESGEDSDDSGDEDSTTTEGGTRRRRRRRRRKSGSGDSDDAVSPDDPPNTVVHERAPRTERSDKSDDSEIQGISGSTRLEAKRQRRRDGRDAGRRRPPILSEAEFLARREAVERTMIVRDKVRTEPPHEGARYTQIAVLEDGVVVEHFVTSAASASLVGNIYLGIVQNVLPSMEAAFVDIGRGRNGVLYAGEVNWEAAGLGGQNRKIEQALKPGDYVVVQVSKDPVGHKGARLTTQVSLAGRYLVYVPGASSTGISRKLPDTERQRLKEILREVVPSDAGVIIRTASEGVKEEDIRSDVERLQKRWSEIEAKAAEVTEKKAGAAVALYEEPDVLVKVIRDLFNEDFSSLIVSGDEAWNTINSYVEAVAPDLMPRLTKYEPAGPDAPDVFAVHRIDEQLAKAMDRKVWLPSGGTLVIDRTEAMTVVDVNTGKFTGSGGNLEQTVTRNNLEAAEEIVRQLRLRDIGGIVVIDFIDMVLESNRDLVLRRLTEALARDRTRHQVSEVTSLGLVQLTRKRLGTGLVEAFSTACTHCGGRGIVLHGDPIDSASSNGGRKSDSSGGGGSGGGRRGKRGKKGAARTEEVHVAKVPDHTPGEHPMFKAMAAANGKHEGDEDHEDHEDHETAEDTTAAEVRDDTRDEHDADERAHVVTAAVGAAGDEDLDDSDEDSDLDSDEESDDESDEDEIELDDDEDELDEDIEVIGDSDDSDDSDDSDEDDDSDDSDDDSDEDEDSDSDEDEEPVREVYEPPVTAPRARVRRRAAARPAGPPSHD.

3 disordered regions span residues 1–23 (MAEDAHTEDLSTQTPQQEGLPER), 47–90 (FDGR…ETPV), and 106–369 (VSEA…PILS). Over residues 47–67 (FDGRQRSAHSTVDKADAERVR) the composition is skewed to basic and acidic residues. Composition is skewed to low complexity over residues 68–90 (AALTESPAAETPPEEAPAAETPV) and 106–126 (VSEAGPAEPAEPAEPEAPAAE). 2 stretches are compositionally biased toward acidic residues: residues 127–141 (AEAEAETEVADEAET) and 196–226 (VVDDEDEDDDTETGAESDFDSGADSDSDDDQ). The segment covering 230 to 242 (PRRRRRGRRGRGR) has biased composition (basic residues). Over residues 248 to 284 (NDDATSDADTDSTEDQTDGDEQESGEDSDDSGDEDST) the composition is skewed to acidic residues. Positions 291-301 (RRRRRRRRRKS) are enriched in basic residues. A compositionally biased stretch (basic and acidic residues) spans 320 to 335 (VHERAPRTERSDKSDD). The S1 motif domain occupies 427-504 (GNIYLGIVQN…GHKGARLTTQ (78 aa)). Positions 561-589 (EDIRSDVERLQKRWSEIEAKAAEVTEKKA) form a coiled coil. The Mg(2+) site is built by aspartate 694 and aspartate 738. Residues cysteine 796 and cysteine 799 each coordinate Zn(2+). The interval 810-1037 (PIDSASSNGG…ARPAGPPSHD (228 aa)) is disordered. The span at 834 to 843 (RRGKRGKKGA) shows a compositional bias: basic residues. The span at 844 to 864 (ARTEEVHVAKVPDHTPGEHPM) shows a compositional bias: basic and acidic residues. Residues 879–891 (EDHEDHEDHETAE) are compositionally biased toward acidic residues. Over residues 897 to 913 (EVRDDTRDEHDADERAH) the composition is skewed to basic and acidic residues. Residues 923 to 1006 (GDEDLDDSDE…DSDSDEDEEP (84 aa)) are compositionally biased toward acidic residues.

The protein belongs to the RNase E/G family. Assembles into a homotetramer formed by a dimer of dimers. Interacts with DNA-binding protein HhupB. Requires Mg(2+) as cofactor. Zn(2+) is required as a cofactor.

Its subcellular location is the cytoplasm. It carries out the reaction Endonucleolytic cleavage of single-stranded RNA in A- and U-rich regions.. Functionally, endoribonuclease that plays a central role in RNA processing and decay. Plays a major role in pre-16S rRNA maturation, probably generating the mature 5'-end, and a minor role in pre-5S and pre-23S rRNA maturation. Probably also processes tRNA. RNase E and HupB jointly contribute to cellular adaptation to changing growth conditions and survival during antibiotic treatment. Overexpression or depletion leads to changes in gene expression; overexpression induces metabolic slowdown and cell stress while depleted strains grow less well than induced strains. This is Ribonuclease E (rne) from Mycolicibacterium smegmatis (strain ATCC 700084 / mc(2)155) (Mycobacterium smegmatis).